Reading from the N-terminus, the 492-residue chain is Stage IV sporulation protein A (492 aa).

A Walker A motif; involved in ATP-binding and hydrolysis motif is present at residues 24–31 (GAVRTGKS). 24–31 (GAVRTGKS) contacts ATP.

Polymerizes to self-assemble into static filaments. ATP hydrolysis is required by every subunit for incorporation into the growing polymer by inducing a conformational change that drives polymerization of a nucleotide-free filament. Polymerization requires a critical concentration of the protein and only occurs after it is localized to the surface of the developing spore. Interacts (via extreme C-terminus Gly-486) with SpoVM (via Ile-6). Interacts (via full-length) with SpoVID (via C-terminus 499-575 AA). Interacts with SafA. In terms of processing, seems to be cleaved by the YabG protease.

It localises to the cytoplasm. It catalyses the reaction ATP + H2O = ADP + phosphate + H(+). Its function is as follows. ATPase. Has a role at an early stage in the morphogenesis of the spore coat outer layers. Its ATP hydrolysis is required for proper assembly of the spore coat. Forms a basement layer around the outside surface of the forespore and self-assembles irreversibly into higher order structures by binding and hydrolyzing ATP thus creating a durable and stable platform upon which thereafter morphogenesis of the coat can take place. Required for proper localization of spore coat protein CotE and sporulation-specific proteins including SpoVM. This is Stage IV sporulation protein A (spoIVA) from Bacillus subtilis (strain 168).